Reading from the N-terminus, the 257-residue chain is Phycoerythrobilin:ferredoxin oxidoreductase (257 aa).

This sequence belongs to the HY2 family.

The catalysed reaction is (3Z)-phycoerythrobilin + oxidized 2[4Fe-4S]-[ferredoxin] = 15,16-dihydrobiliverdin + reduced 2[4Fe-4S]-[ferredoxin] + 2 H(+). Functionally, catalyzes the two-electron reduction of the C2 and C3(1) diene system of 15,16-dihydrobiliverdin. This is Phycoerythrobilin:ferredoxin oxidoreductase (pebB) from Synechococcus sp. (strain WH8020).